Reading from the N-terminus, the 1115-residue chain is Calcium-transporting ATPase PAT1 (1115 aa).

Residues 1–99 (MTGSHEMESI…SIVLDALSDH (99 aa)) lie on the Stromal side of the membrane. The chain crosses the membrane as a helical span at residues 100-120 (ILILLIVAAVVSIVLGSIDYT). The Lumenal segment spans residues 121-126 (SDHPET). The helical transmembrane segment at 127–147 (GWIDGVAILVAVILVVGITSL) threads the bilayer. Topologically, residues 148–235 (NDFKNQARFR…KGQPQDNMDP (88 aa)) are stromal. The chain crosses the membrane as a helical span at residues 236 to 256 (FLISGSMVIEGFGTMLVTAVG). Over 257–287 (VNSFNGKTMMGLRVASEDTPLQMKLSVLASR) the chain is Lumenal. A helical transmembrane segment spans residues 288-308 (IGYFGMGAAILMLLIAIPKYF). Over 309–328 (IQRKVHDIEITREDAQPIVQ) the chain is Stromal. Residues 329–349 (LVISAITIVVVAVPEGLPLAV) form a helical membrane-spanning segment. The Lumenal segment spans residues 350–735 (TMALAYGMMK…GRNIYDAICK (386 aa)). Asp-385 acts as the 4-aspartylphosphate intermediate in catalysis. Mg(2+) contacts are provided by Asp-678 and Asp-682. A helical membrane pass occupies residues 736-756 (FLQFQLTVNVVAVTVAFIGTL). Residues 757 to 832 (TSDVVEDKDN…GKNAPLITRS (76 aa)) lie on the Stromal side of the membrane. Residues 762 to 784 (EDKDNSSSSGSADKVTEEEPRQG) are disordered. A helical transmembrane segment spans residues 833–853 (MWKNIIGQAALQLAILFTILY). The Lumenal segment spans residues 854–873 (QGHNIFQHFVPQAHGPIIKN). Residues 874 to 894 (GLHHYTLVFNCFVFLQLFNEI) traverse the membrane as a helical segment. Over 895–913 (NARVLGSRTNPFKNFFNNP) the chain is Stromal. A helical membrane pass occupies residues 914 to 934 (IFIAVMIFTLGVQIIFVTFGG). Over 935-943 (SATSTDSLY) the chain is Lumenal. A helical transmembrane segment spans residues 944-964 (IVEWICCVVVGAISLPVGLLL). At 965–1115 (RKIPIREPVV…LHLPVNQINN (151 aa)) the chain is on the stromal side. Residues 984-1056 (AVYTSPSPNP…IPSSSSNLVN (73 aa)) form a disordered region. The segment covering 1040–1053 (NDNINTPIPSSSSN) has biased composition (low complexity).

The protein belongs to the cation transport ATPase (P-type) (TC 3.A.3) family. Type IIB subfamily.

The protein resides in the contractile vacuole membrane. Its subcellular location is the cell membrane. It catalyses the reaction Ca(2+)(in) + ATP + H2O = Ca(2+)(out) + ADP + phosphate + H(+). In terms of biological role, calcium ATPase involved in Ca(2+) homeostasis as a component of the contractile vacuole complex. The chain is Calcium-transporting ATPase PAT1 (patA) from Dictyostelium discoideum (Social amoeba).